We begin with the raw amino-acid sequence, 262 residues long: Calbindin (262 aa).

T2 carries the N-acetylthreonine modification. EF-hand domains lie at I12 to A47, D54 to F89, K99 to K134, K143 to F178, and M187 to K222. D25, D27, N29, Y31, and E36 together coordinate Ca(2+). Residues D112, D114, S116, E123, D156, N158, D160, K162, E167, D200, D202, N204, Y206, and E211 each coordinate Ca(2+).

The protein belongs to the calbindin family. In terms of tissue distribution, highly abundant in supporting cells. Also present in hair cells.

Functionally, buffers cytosolic calcium. May stimulate a membrane Ca(2+)-ATPase and a 3',5'-cyclic nucleotide phosphodiesterase. The sequence is that of Calbindin (CALB1) from Gallus gallus (Chicken).